Consider the following 139-residue polypeptide: Stress-related protein 1 (139 aa).

The segment covering 1 to 12 (MTSESSTPTGST) has biased composition (polar residues). The interval 1–86 (MTSESSTPTG…AERPGSATTP (86 aa)) is disordered. Low complexity-rich tracts occupy residues 14–53 (ALPA…SLVV) and 60–74 (SPVV…TRPR). Position 60 is a phosphoserine (serine 60).

Embryo.

In terms of biological role, involved in drought, heat, cold, and/or salt tolerance. The protein is Stress-related protein 1 (SRP1) of Zea mays (Maize).